We begin with the raw amino-acid sequence, 133 residues long: Small ribosomal subunit protein bS6 (133 aa).

The protein belongs to the bacterial ribosomal protein bS6 family.

Its function is as follows. Binds together with bS18 to 16S ribosomal RNA. This Chlorobium limicola (strain DSM 245 / NBRC 103803 / 6330) protein is Small ribosomal subunit protein bS6.